Here is a 286-residue protein sequence, read N- to C-terminus: 2-dehydro-3-deoxyphosphooctonate aldolase (286 aa).

This sequence belongs to the KdsA family.

The protein localises to the cytoplasm. The catalysed reaction is D-arabinose 5-phosphate + phosphoenolpyruvate + H2O = 3-deoxy-alpha-D-manno-2-octulosonate-8-phosphate + phosphate. Its pathway is carbohydrate biosynthesis; 3-deoxy-D-manno-octulosonate biosynthesis; 3-deoxy-D-manno-octulosonate from D-ribulose 5-phosphate: step 2/3. The protein operates within bacterial outer membrane biogenesis; lipopolysaccharide biosynthesis. In Shewanella denitrificans (strain OS217 / ATCC BAA-1090 / DSM 15013), this protein is 2-dehydro-3-deoxyphosphooctonate aldolase.